The chain runs to 542 residues: Delta 8-(E)-sphingolipid desaturase (542 aa).

Positions 1-75 (MVVSREEVRE…FKRWSIGRVK (75 aa)) constitute a Cytochrome b5 heme-binding domain. Heme-binding residues include H35 and H58. The next 2 helical transmembrane spans lie at 215–235 (WYTL…FIAH) and 248–268 (IDNI…LGWW). The short motif at 235–239 (HDAGH) is the Histidine box-1 element. The Histidine box-2 signature appears at 272-276 (HNVHH). The next 3 membrane-spanning stretches (helical) occupy residues 329–346 (LYYP…RLSW), 360–380 (AAWF…WFFY), and 393–413 (FWFL…IVLS). Residues 455-459 (QAIHH) carry the Histidine box-3 motif.

The protein belongs to the fatty acid desaturase type 1 family.

The protein localises to the membrane. It carries out the reaction an N-acylsphing-4-enine + 2 Fe(II)-[cytochrome b5] + O2 + 2 H(+) = a (4E,8E)-4-sphinga-4,8-dienine ceramide + 2 Fe(III)-[cytochrome b5] + 2 H2O. Its pathway is lipid metabolism; sphingolipid metabolism. In terms of biological role, delta(8)-fatty-acid desaturase which introduces a double bond at the 8-position in the long-chain base (LCB) of ceramides. Required for the formation of the di-unsaturated sphingoid base (E,E)-sphinga-4,8-dienine during glucosylceramide (GluCer) biosynthesis. The sequence is that of Delta 8-(E)-sphingolipid desaturase from Komagataella phaffii (strain GS115 / ATCC 20864) (Yeast).